The primary structure comprises 156 residues: Small ribosomal subunit protein uS7 (156 aa).

This sequence belongs to the universal ribosomal protein uS7 family. As to quaternary structure, part of the 30S ribosomal subunit. Contacts proteins S9 and S11.

Functionally, one of the primary rRNA binding proteins, it binds directly to 16S rRNA where it nucleates assembly of the head domain of the 30S subunit. Is located at the subunit interface close to the decoding center, probably blocks exit of the E-site tRNA. The sequence is that of Small ribosomal subunit protein uS7 from Solibacter usitatus (strain Ellin6076).